The primary structure comprises 236 residues: Uridylate kinase (236 aa).

Residue 10–13 (KLSG) coordinates ATP. Residues 18–23 (GEDGYG) are involved in allosteric activation by GTP. Gly-52 lines the UMP pocket. Residues Gly-53 and Arg-57 each coordinate ATP. UMP-binding positions include Asp-72 and 133–140 (TGNPYFTT). ATP is bound by residues Thr-160, Tyr-166, and Asp-169.

This sequence belongs to the UMP kinase family. As to quaternary structure, homohexamer.

Its subcellular location is the cytoplasm. It catalyses the reaction UMP + ATP = UDP + ADP. The protein operates within pyrimidine metabolism; CTP biosynthesis via de novo pathway; UDP from UMP (UMPK route): step 1/1. Allosterically activated by GTP. Inhibited by UTP. Its function is as follows. Catalyzes the reversible phosphorylation of UMP to UDP. The protein is Uridylate kinase of Chlorobium phaeobacteroides (strain DSM 266 / SMG 266 / 2430).